Reading from the N-terminus, the 174-residue chain is Large ribosomal subunit protein uL10 (174 aa).

It belongs to the universal ribosomal protein uL10 family. Part of the ribosomal stalk of the 50S ribosomal subunit. The N-terminus interacts with L11 and the large rRNA to form the base of the stalk. The C-terminus forms an elongated spine to which L12 dimers bind in a sequential fashion forming a multimeric L10(L12)X complex.

Functionally, forms part of the ribosomal stalk, playing a central role in the interaction of the ribosome with GTP-bound translation factors. The polypeptide is Large ribosomal subunit protein uL10 (Trichlorobacter lovleyi (strain ATCC BAA-1151 / DSM 17278 / SZ) (Geobacter lovleyi)).